Consider the following 212-residue polypeptide: UPF0319 protein PBPRA2789 (212 aa).

Residues 1-21 (MKKILLAFTLPLVLASQTAMA) form the signal peptide.

The protein belongs to the UPF0319 family.

The protein is UPF0319 protein PBPRA2789 of Photobacterium profundum (strain SS9).